A 230-amino-acid polypeptide reads, in one-letter code: Ureidoacrylate amidohydrolase RutB (230 aa).

D24 serves as the catalytic Proton acceptor. Residue K133 is part of the active site. C166 serves as the catalytic Nucleophile.

Belongs to the isochorismatase family. RutB subfamily.

It carries out the reaction (Z)-3-ureidoacrylate + H2O + H(+) = (Z)-3-aminoacrylate + NH4(+) + CO2. It catalyses the reaction (Z)-3-ureidoacrylate + H2O = (Z)-3-aminoacrylate + carbamate + H(+). The catalysed reaction is (Z)-2-methylureidoacrylate + H2O + H(+) = (Z)-2-methylaminoacrylate + NH4(+) + CO2. Hydrolyzes ureidoacrylate to form aminoacrylate and carbamate. The carbamate hydrolyzes spontaneously, thereby releasing one of the nitrogen atoms of the pyrimidine ring as ammonia and one of its carbon atoms as CO2. This is Ureidoacrylate amidohydrolase RutB from Escherichia coli O7:K1 (strain IAI39 / ExPEC).